Here is a 1506-residue protein sequence, read N- to C-terminus: ABC transporter C family member 9 (1506 aa).

The next 11 helical transmembrane spans lie at 37-57 (MQVTFLAFFLIHLALKWFGVV), 84-104 (ISLLCSVSILGTHCFILLLLF), 116-136 (VSVFSAEVSQSFSWLFVSVVV), 150-170 (MLRSWWLCSFILSFSFDAHFI), 179-199 (FQDYADLTGLLASLFLLAVSI), 315-335 (AINAVFAVVNASTAYIGPYLI), 350-370 (LNHGYLLALGFLTAKIVETVT), 427-447 (FIWYVNNIWMLPIQIFSAIYI), 452-472 (LGLGALAALVTTLMVMACNYP), 541-561 (FILWGAPSLISVVTFVTCMLM), and 567-587 (AGAVLSALATFQMLQSPIFGL). Residues 314-596 (AAINAVFAVV…LPDLLSALVQ (283 aa)) form the ABC transmembrane type-1 1 domain. The region spanning 630–853 (VEIENGAFSW…NIGFEVLVGA (224 aa)) is the ABC transporter 1 domain. 665–672 (GAVGSGKS) is a binding site for ATP. The next 5 helical transmembrane spans lie at 934 to 956 (LLVPFIILAQSCFQMLQIASNYW), 976 to 996 (ILLVYALLAAGSSLCVLARTI), 1048 to 1068 (MAVKLGWCAFSIIQIVGTIFV), 1167 to 1187 (LSHFVFAFSLVLLVTLPEGVI), and 1191 to 1211 (IAGLGVTYGLSLNVLQATVIW). The region spanning 936–1218 (VPFIILAQSC…VIWNICNAEN (283 aa)) is the ABC transmembrane type-1 2 domain. The region spanning 1257 to 1489 (FRDLQVRYAE…EDSFFSKLIK (233 aa)) is the ABC transporter 2 domain. Position 1289-1296 (1289-1296 (GRTGSGKS)) interacts with ATP.

This sequence belongs to the ABC transporter superfamily. ABCC family. Conjugate transporter (TC 3.A.1.208) subfamily. In terms of tissue distribution, ubiquitous.

It localises to the membrane. It catalyses the reaction ATP + H2O + xenobioticSide 1 = ADP + phosphate + xenobioticSide 2.. Functionally, pump for glutathione S-conjugates. This is ABC transporter C family member 9 (ABCC9) from Arabidopsis thaliana (Mouse-ear cress).